A 57-amino-acid polypeptide reads, in one-letter code: UPF0391 membrane protein XOO1885 (57 aa).

Helical transmembrane passes span 4–24 and 33–53; these read WAII…GGMA and FLFW…MTIA.

This sequence belongs to the UPF0391 family.

It is found in the cell membrane. The chain is UPF0391 membrane protein XOO1885 from Xanthomonas oryzae pv. oryzae (strain KACC10331 / KXO85).